Reading from the N-terminus, the 194-residue chain is Potassium-transporting ATPase KdpC subunit (194 aa).

Residues 12–34 (LFLLLLTGGVYPLLTTALGQWWF) form a helical membrane-spanning segment.

Belongs to the KdpC family. The system is composed of three essential subunits: KdpA, KdpB and KdpC.

The protein localises to the cell inner membrane. Functionally, part of the high-affinity ATP-driven potassium transport (or Kdp) system, which catalyzes the hydrolysis of ATP coupled with the electrogenic transport of potassium into the cytoplasm. This subunit acts as a catalytic chaperone that increases the ATP-binding affinity of the ATP-hydrolyzing subunit KdpB by the formation of a transient KdpB/KdpC/ATP ternary complex. The chain is Potassium-transporting ATPase KdpC subunit from Salmonella choleraesuis (strain SC-B67).